Reading from the N-terminus, the 153-residue chain is Agglutinin (153 aa).

Residues asparagine 22–glutamate 25 and asparagine 46 each bind beta-D-galactosyl-(1-&gt;3)-N-acetyl-D-galactosamine. The region spanning glycine 58–lysine 153 is the Ricin B-type lectin domain.

Homodimer.

Functionally, lectin that primarily recognizes glycans with a non-reducing terminal N-acetylgalactosamine (GalNAc), with a preference for the alpha- over the beta-anomer. Can also bind non-reducing terminal galactose (Gal) residues but with a lower affinity. Strongly interacts with glycolipid type glycans with terminal non-reducing Gal or GalNAc but fails to bind sialylated or fucosylated forms of the same glycans. Strongly interacts with galactosylated N-glycans, displaying highest affinity for alpha-1-3 branched mono-antennary N-glycans but also binding to multi-antennary glycans. This chain is Agglutinin, found in Sclerotinia sclerotiorum (strain ATCC 18683 / 1980 / Ss-1) (White mold).